We begin with the raw amino-acid sequence, 182 residues long: Flavin prenyltransferase UbiX (182 aa).

Residues 9–11 (GAS), S35, 86–89 (SIKT), and R121 each bind FMN. Residues Y151 and R167 each coordinate dimethylallyl phosphate.

It belongs to the UbiX/PAD1 family.

The catalysed reaction is dimethylallyl phosphate + FMNH2 = prenylated FMNH2 + phosphate. Its function is as follows. Flavin prenyltransferase that catalyzes the synthesis of the prenylated FMN cofactor (prenyl-FMN) for 4-hydroxy-3-polyprenylbenzoic acid decarboxylase UbiD. The prenyltransferase is metal-independent and links a dimethylallyl moiety from dimethylallyl monophosphate (DMAP) to the flavin N5 and C6 atoms of FMN. The chain is Flavin prenyltransferase UbiX from Archaeoglobus fulgidus (strain ATCC 49558 / DSM 4304 / JCM 9628 / NBRC 100126 / VC-16).